Reading from the N-terminus, the 467-residue chain is Phytase A (467 aa).

A signal peptide spans 1-23 (MGVSAVLLPLYLLAGVTSGLAVP). N-linked (GlcNAc...) asparagine glycosylation occurs at Asn27. A disulfide bridge connects residues Cys31 and Cys40. Positions 50 and 51 each coordinate 1D-myo-inositol hexakisphosphate. Residue Asn59 is glycosylated (N-linked (GlcNAc...) asparagine). Disulfide bonds link Cys71/Cys414, Cys215/Cys465, Cys264/Cys282, and Cys436/Cys444. 1D-myo-inositol hexakisphosphate is bound by residues Arg81, His82, Arg85, and Thr88. The Nucleophile role is filled by His82. 2 N-linked (GlcNAc...) asparagine glycosylation sites follow: Asn105 and Asn120. 1D-myo-inositol hexakisphosphate is bound at residue Arg165. N-linked (GlcNAc...) asparagine glycans are attached at residues Asn207 and Asn230. Position 301 (Lys301) interacts with 1D-myo-inositol hexakisphosphate. Asn339 and Asn352 each carry an N-linked (GlcNAc...) asparagine glycan. 2 residues coordinate 1D-myo-inositol hexakisphosphate: His361 and Asp362. 2 N-linked (GlcNAc...) asparagine glycosylation sites follow: Asn376 and Asn388.

Belongs to the histidine acid phosphatase family. In terms of assembly, monomer.

Its subcellular location is the secreted. The enzyme catalyses 1D-myo-inositol hexakisphosphate + H2O = 1D-myo-inositol 1,2,4,5,6-pentakisphosphate + phosphate. It carries out the reaction 1D-myo-inositol 1,2,4,5,6-pentakisphosphate + H2O = 1D-myo-inositol 1,2,5,6-tetrakisphosphate + phosphate. It catalyses the reaction 1D-myo-inositol 1,2,5,6-tetrakisphosphate + H2O = 1D-myo-inositol 1,2,6-trisphosphate + phosphate. The catalysed reaction is 1D-myo-inositol 1,2,6-trisphosphate + H2O = 1D-myo-inositol 1,2-bisphosphate + phosphate. The enzyme catalyses 1D-myo-inositol 1,2-bisphosphate + H2O = 1D-myo-inositol 2-phosphate + phosphate. Functionally, catalyzes the phosphate monoester hydrolysis of phytic acid (myo-inositol hexakisphosphate), which results in the stepwise formation of myo-inositol pentakis-, tetrakis-, tris-, bis-, and monophosphates, as well as the liberation of inorganic phosphate. Myo-inositol 2-monophosphate is the end product. This chain is Phytase A (phyA), found in Aspergillus awamori (Black koji mold).